Consider the following 234-residue polypeptide: Response regulator RppA (234 aa).

The Response regulatory domain maps to 2–118 (RILLVEDETD…ELLARLRALQ (117 aa)). At D53 the chain carries 4-aspartylphosphate. The segment at residues 126-232 (PQILTLGNFS…VPGQGYRFTL (107 aa)) is a DNA-binding region (ompR/PhoB-type).

Interacts with histidine kinase Hik2; may accept phosphate from Hik2.

Functionally, member of two-component regulatory system RppA/RppB, involved in the establishment of the appropriate stoichiometry between the 2 photosystems. It senses changes in the plastoquinone (PQ) redox poise. Another group shows this two-component pair, renamed NrsR/NrsS, controls the nickel-dependent expression of the nrsBACD operon; they suggest the photosystem-related activities seen earlier are due to the expression of NrsS (RppB) in the absence of its natural substrate NrsR (RppA). May accept phosphate from Hik2 in a possible Hik2/RppA two-component system. In Synechocystis sp. (strain ATCC 27184 / PCC 6803 / Kazusa), this protein is Response regulator RppA.